A 391-amino-acid chain; its full sequence is Probable acridone synthase 4 (391 aa).

Residue C164 is part of the active site.

This sequence belongs to the thiolase-like superfamily. Chalcone/stilbene synthases family.

It catalyses the reaction N-methylanthraniloyl-CoA + 3 malonyl-CoA + 3 H(+) = 1,3-dihydroxy-N-methylacridone + 3 CO2 + 4 CoA + H2O. In Ruta graveolens (Common rue), this protein is Probable acridone synthase 4 (ACS4).